A 111-amino-acid polypeptide reads, in one-letter code: Photosystem II reaction center Psb28 protein (111 aa).

This sequence belongs to the Psb28 family. In terms of assembly, part of the photosystem II complex.

It is found in the cellular thylakoid membrane. The chain is Photosystem II reaction center Psb28 protein from Acaryochloris marina (strain MBIC 11017).